The sequence spans 335 residues: Fructose-1,6-bisphosphatase class 1 (335 aa).

The Mg(2+) site is built by Glu-91, Asp-113, Leu-115, and Asp-116. Substrate contacts are provided by residues 116–119, Asn-208, and Lys-274; that span reads DGSS. A Mg(2+)-binding site is contributed by Glu-280.

The protein belongs to the FBPase class 1 family. In terms of assembly, homotetramer. The cofactor is Mg(2+).

The protein localises to the cytoplasm. The enzyme catalyses beta-D-fructose 1,6-bisphosphate + H2O = beta-D-fructose 6-phosphate + phosphate. It participates in carbohydrate biosynthesis; gluconeogenesis. The chain is Fructose-1,6-bisphosphatase class 1 from Chromobacterium violaceum (strain ATCC 12472 / DSM 30191 / JCM 1249 / CCUG 213 / NBRC 12614 / NCIMB 9131 / NCTC 9757 / MK).